The following is an 84-amino-acid chain: UPF0457 protein BT9727_2307 (84 aa).

This sequence belongs to the UPF0457 family.

The protein is UPF0457 protein BT9727_2307 of Bacillus thuringiensis subsp. konkukian (strain 97-27).